The sequence spans 83 residues: MKVSVLITLAVLGVMFVWTSAAELEERGSDQPAWLKSLERIFQSEERDCRALYGGCTKDEDCCKHLACRRTLPTYCAWDLTFP.

The first 21 residues, 1-21, serve as a signal peptide directing secretion; sequence MKVSVLITLAVLGVMFVWTSA. A propeptide spanning residues 22 to 47 is cleaved from the precursor; the sequence is AELEERGSDQPAWLKSLERIFQSEER. Intrachain disulfides connect C49–C63, C56–C68, and C62–C76.

This sequence belongs to the neurotoxin 10 (Hwtx-1) family. 40 (Jztx-35) subfamily. In terms of tissue distribution, expressed by the venom gland.

It localises to the secreted. Probable ion channel inhibitor. This Chilobrachys guangxiensis (Chinese earth tiger tarantula) protein is U20-theraphotoxin-Cg1a 1.